The primary structure comprises 92 residues: C-C motif chemokine 3 (92 aa).

The first 23 residues, 1 to 23 (MKVSTAALAVLLCTMALWNEVFS), serve as a signal peptide directing secretion. 2 cysteine pairs are disulfide-bonded: Cys34–Cys57 and Cys35–Cys73.

Belongs to the intercrine beta (chemokine CC) family. As to quaternary structure, self-associates. Also heterodimer of MIP-1-alpha(4-69) and MIP-1-beta(3-69). Interacts with CCR1.

It is found in the secreted. In terms of biological role, monokine with inflammatory and chemokinetic properties. Binds to CCR1, CCR4 and CCR5. One of the major HIV-suppressive factors produced by CD8+ T-cells. Recombinant MIP-1-alpha induces a dose-dependent inhibition of different strains of HIV-1, HIV-2, and simian immunodeficiency virus (SIV). The protein is C-C motif chemokine 3 (Ccl3) of Rattus norvegicus (Rat).